The following is a 330-amino-acid chain: DNA-directed RNA polymerase subunit alpha (330 aa).

The segment at 1-225 (MSDLAIPTIS…KQFAALVSHN (225 aa)) is alpha N-terminal domain (alpha-NTD). Residues 237–330 (VKYAIPEEKY…KKKNKGMDEA (94 aa)) are alpha C-terminal domain (alpha-CTD).

It belongs to the RNA polymerase alpha chain family. As to quaternary structure, homodimer. The RNAP catalytic core consists of 2 alpha, 1 beta, 1 beta' and 1 omega subunit. When a sigma factor is associated with the core the holoenzyme is formed, which can initiate transcription.

It carries out the reaction RNA(n) + a ribonucleoside 5'-triphosphate = RNA(n+1) + diphosphate. Its function is as follows. DNA-dependent RNA polymerase catalyzes the transcription of DNA into RNA using the four ribonucleoside triphosphates as substrates. This Dehalococcoides mccartyi (strain ATCC BAA-2266 / KCTC 15142 / 195) (Dehalococcoides ethenogenes (strain 195)) protein is DNA-directed RNA polymerase subunit alpha.